The primary structure comprises 1279 residues: Maestro heat-like repeat-containing protein family member 7 (1279 aa).

Residues 1-145 (MALSRGTSLI…NSSRPCSEDV (145 aa)) form a disordered region. The segment covering 39-61 (PDLALAPPPEHALALTPALHPAL) has biased composition (low complexity). Polar residues-rich tracts occupy residues 71–106 (PVSNDIPSHNASGATTPSSTQINTVDTADQGLNHTS) and 124–140 (PSSTQANVLSPENSSRP). 5 N-linked (GlcNAc...) asparagine glycosylation sites follow: N200, N210, N255, N267, and N296. The residue at position 356 (S356) is a Phosphoserine. The N-linked (GlcNAc...) asparagine glycan is linked to N541. The next 2 helical transmembrane spans lie at 548 to 568 (TLVTLPFLISSGFPTLGLLLG) and 722 to 742 (LLPISFLASSFMTEVVVALLM). HEAT repeat units lie at residues 913 to 950 (QELCRILYLLIPLLERGDERHKITATAFFVELFRMEQV), 992 to 1029 (AKVQSLLPSMVKSLKNMDGMLVVEAVHDLKRIFKGQGK), 1035 to 1072 (AVYVEMLQILLPHFTDAREMVRASCINVYGKVVKKLQT), and 1080 to 1117 (EQLTSTLMPLLFIIQEGNAKVSQKCVKTLVCCSSFMNW).

It localises to the membrane. The protein is Maestro heat-like repeat-containing protein family member 7 (Mroh7) of Mus musculus (Mouse).